The chain runs to 1337 residues: Rho GTPase-activating protein 29 (1337 aa).

The span at 1–13 (MFRQGSNSGNKRM) shows a compositional bias: polar residues. Disordered stretches follow at residues 1–20 (MFRQGSNSGNKRMTSGARLS), 369–397 (REEYEKARSSTSRTEEEQPAAGGRTLEKK), 513–551 (SSKTGMSLHKRSQNSTRSSHGNLSQGSATSMDNHSADEV), and 564–654 (ERRS…TGLS). The 264-residue stretch at 225–488 (EQVDLLLLKN…QAKKYEPGQR (264 aa)) folds into the F-BAR domain. The stretch at 326 to 443 (LLARKNDLDK…SEILAQIRKL (118 aa)) forms a coiled coil. Basic and acidic residues predominate over residues 369 to 384 (REEYEKARSSTSRTEE). Composition is skewed to polar residues over residues 525 to 545 (QNSTRSSHGNLSQGSATSMDN) and 568 to 579 (NSSIDMQVPRTQ). The span at 596–613 (CSDSESAGGSSESRSMDS) shows a compositional bias: low complexity. Residues 676-723 (AHTHKLRKLRAPSKCRECDSLVVFHGAECEECSLACHKKCLETLAIQC) form a Phorbol-ester/DAG-type zinc finger. Positions 737-950 (IDFAQVVKNS…LLIKHHQMIF (214 aa)) constitute a Rho-GAP domain. Over residues 960–973 (TSPTVSQASFGSSI) the composition is skewed to polar residues. 5 disordered regions span residues 960 to 983 (TSPTVSQASFGSSIQDKESKLSRH), 1016 to 1066 (MKTG…AKPV), 1083 to 1114 (SRNTVEHDHSPAAIEETTEPEKPTTPRHTNFY), 1149 to 1210 (PPSG…KPSD), and 1273 to 1337 (TVSR…AHFV). The segment covering 974–983 (QDKESKLSRH) has biased composition (basic and acidic residues). A compositionally biased stretch (basic and acidic residues) spans 1083 to 1092 (SRNTVEHDHS). 2 stretches are compositionally biased toward polar residues: residues 1161 to 1177 (MASQSSTSRKDGTSQSG) and 1295 to 1310 (VTLSPPQSPGSSTEEL). The segment covering 1325 to 1337 (RMQELEHREAHFV) has biased composition (basic and acidic residues).

In terms of biological role, GTPase activator for the Rho-type GTPases by converting them to an inactive GDP-bound state. Has strong activity toward RHOA, and weaker activity toward RAC1 and CDC42. The sequence is that of Rho GTPase-activating protein 29 (arhgap29) from Danio rerio (Zebrafish).